The primary structure comprises 382 residues: Prostaglandin D2 receptor 2 (382 aa).

The Extracellular segment spans residues 1–32 (MANVTLKPLCPLLEEMVQLPNHSNSSLRYIDH). 3 N-linked (GlcNAc...) asparagine glycosylation sites follow: asparagine 3, asparagine 21, and asparagine 24. The helical transmembrane segment at 33–55 (VSVLLHGLASLLGLVENGLILFV) threads the bilayer. At 56–66 (VGCRMRQTVVT) the chain is on the cytoplasmic side. A helical transmembrane segment spans residues 67-88 (TWVLHLALSDLLAAASLPFFTY). Topologically, residues 89-105 (FLAVGHSWELGTTFCKL) are extracellular. A disulfide bond links cysteine 103 and cysteine 181. A helical membrane pass occupies residues 106–126 (HSSVFFLNMFASGFLLSAISL). The Cytoplasmic portion of the chain corresponds to 127 to 145 (DRCLQVVRPVWAQNHRTVA). A helical transmembrane segment spans residues 146 to 167 (VAHRVCLMLWALAVLNTIPYFV). Over 168–209 (FRDTIPRLDGRIMCYYNLLLWNPGPDRDTTCDYRQKALAVSK) the chain is Extracellular. Residues 210–230 (FLLAFMVPLAIIASSHVAVSL) traverse the membrane as a helical segment. Topologically, residues 231–246 (RLHHRGRQRTGRFVRL) are cytoplasmic. The chain crosses the membrane as a helical span at residues 247 to 268 (VAAIVVAFVLCWGPYHIFSLLE). At 269–287 (ARAHSVTTLRQLASRGLPF) the chain is on the extracellular side. A helical membrane pass occupies residues 288–307 (VTSLAFFNSVVNPLLYVFTC). Over 308–357 (PDMLYKLRRSLRAVLESVLVEDSDQSGGLRNRRRRASSTATPASTLLLAD) the chain is Cytoplasmic. The Involved in the recycling of CRTH2 signature appears at 329-332 (DSDQ). Serine 330 and serine 344 each carry phosphoserine.

Belongs to the G-protein coupled receptor 1 family. Post-translationally, phosphorylated.

The protein localises to the cell membrane. Receptor for prostaglandin D2 (PGD2). Coupled to the G(i)-protein. Receptor activation may result in pertussis toxin-sensitive decreases in cAMP levels and Ca(2+) mobilization. PI3K signaling is also implicated in mediating PTGDR2 effects. PGD2 induced receptor internalization. CRTH2 internalization can be regulated by diverse kinases such as, PKC, PKA, GRK2, GPRK5/GRK5 and GRK6. Receptor activation is responsible, at least in part, in immune regulation and allergic/inflammation responses. In Mus musculus (Mouse), this protein is Prostaglandin D2 receptor 2 (Ptgdr2).